Consider the following 37-residue polypeptide: uncharacterized protein (37 aa).

The protein belongs to the poxviridae A56.5 protein family.

This is an uncharacterized protein from Vaccinia virus (strain Western Reserve) (VACV).